A 533-amino-acid polypeptide reads, in one-letter code: MSLPYLFLDSEVTPPISLSLAFIIFMFLVKFILKTHNKNSVPVVPLPPGPSPWPIVGSLPEMWRNRPAHRWIHSLMKKLNTDIACIRLGNVHVIPVTSPEIAREFLKKNDAVFASRPVTMATKTLSSGYLTTVVGPWGDQWRKMRRVLVAEAFNPSRVHWLLGKRNEEADNLVKFLYNQCSANQNGAVVNVRIAAQFYSGSIMRKMIFNRTYFGKGREDGGPGVEEEEHVSALLTLLTYAYAFCVSDYLPWLRVFDIDGHEKKVRKAMNIVKKHQEPIVNERLQEWRDGKRNEPDDLLDVFISLKDANGQPLLSDEEIKAQTTELQLSTVDSPFNIAEWALTEMLNQPEMLKKAEEELDRVVGKKTLVQESHVPHLPYIRACAKEVMRLHPVGPFNLPHVSIADAEVAGYFIPKGSNVILSRLELGRNPRVWEEPLRFNPERHLNIAVDQQVDLEENDLRFVSFSTGRRGCMGVGLGSTIVVMLLARLLQGFSWSLPPDVDKIDFTEDQIYLKKASPLLAQAKPRLPASVYPI.

The helical transmembrane segment at 12–32 (VTPPISLSLAFIIFMFLVKFI) threads the bilayer. N-linked (GlcNAc...) asparagine glycosylation is present at asparagine 209. Cysteine 471 contributes to the heme binding site.

This sequence belongs to the cytochrome P450 family. The cofactor is heme. Confined to buds.

Its subcellular location is the membrane. The enzyme catalyses L-tryptophan + 2 reduced [NADPH--hemoprotein reductase] + 2 O2 = (E)-(indol-3-yl)acetaldehyde oxime + 2 oxidized [NADPH--hemoprotein reductase] + CO2 + 3 H2O + 2 H(+). Catalyzes with low efficiency E and Z isomers of indole-3-acetaldoxime from tryptophan (Trp). This is Tryptophan N-monooxygenase CYP79A68 from Prunus mume (Japanese apricot).